The sequence spans 453 residues: 3-phosphoshikimate 1-carboxyvinyltransferase (453 aa).

The interval 1-27 (MSHDSEPQPVTATPGGPLNGSLKPPGD) is disordered. Positions 28, 29, and 33 each coordinate 3-phosphoshikimate. Lysine 28 contributes to the phosphoenolpyruvate binding site. Glycine 101 and arginine 129 together coordinate phosphoenolpyruvate. 4 residues coordinate 3-phosphoshikimate: serine 175, glutamine 177, aspartate 330, and lysine 357. Glutamine 177 is a phosphoenolpyruvate binding site. The active-site Proton acceptor is aspartate 330. Phosphoenolpyruvate is bound by residues arginine 361 and arginine 405.

It belongs to the EPSP synthase family. Monomer.

The protein resides in the cytoplasm. The enzyme catalyses 3-phosphoshikimate + phosphoenolpyruvate = 5-O-(1-carboxyvinyl)-3-phosphoshikimate + phosphate. It functions in the pathway metabolic intermediate biosynthesis; chorismate biosynthesis; chorismate from D-erythrose 4-phosphate and phosphoenolpyruvate: step 6/7. Functionally, catalyzes the transfer of the enolpyruvyl moiety of phosphoenolpyruvate (PEP) to the 5-hydroxyl of shikimate-3-phosphate (S3P) to produce enolpyruvyl shikimate-3-phosphate and inorganic phosphate. The protein is 3-phosphoshikimate 1-carboxyvinyltransferase of Methylorubrum extorquens (strain CM4 / NCIMB 13688) (Methylobacterium extorquens).